The chain runs to 569 residues: Proline--tRNA ligase (569 aa).

Belongs to the class-II aminoacyl-tRNA synthetase family. ProS type 1 subfamily. In terms of assembly, homodimer.

The protein resides in the cytoplasm. The catalysed reaction is tRNA(Pro) + L-proline + ATP = L-prolyl-tRNA(Pro) + AMP + diphosphate. In terms of biological role, catalyzes the attachment of proline to tRNA(Pro) in a two-step reaction: proline is first activated by ATP to form Pro-AMP and then transferred to the acceptor end of tRNA(Pro). As ProRS can inadvertently accommodate and process non-cognate amino acids such as alanine and cysteine, to avoid such errors it has two additional distinct editing activities against alanine. One activity is designated as 'pretransfer' editing and involves the tRNA(Pro)-independent hydrolysis of activated Ala-AMP. The other activity is designated 'posttransfer' editing and involves deacylation of mischarged Ala-tRNA(Pro). The misacylated Cys-tRNA(Pro) is not edited by ProRS. The protein is Proline--tRNA ligase of Shewanella loihica (strain ATCC BAA-1088 / PV-4).